We begin with the raw amino-acid sequence, 381 residues long: cAMP-dependent protein kinase type I-beta regulatory subunit (381 aa).

Residues 1–136 (MASPSCFHSE…ALAKAISKNV (136 aa)) form a dimerization and phosphorylation region. Residue Ser-3 is modified to Phosphoserine. A 3'-nitrotyrosine modification is found at Tyr-21. A disordered region spans residues 66–88 (LARQKSNSQCDSHDEEISPTPPN). Ser-77 and Ser-83 each carry phosphoserine. At Thr-85 the chain carries Phosphothreonine. A Pseudophosphorylation motif motif is present at residues 96-100 (RRGGV). Position 97 is an omega-N-methylarginine (Arg-97). 3',5'-cyclic AMP is bound by residues 137–254 (LFSH…SKVS), Glu-202, Arg-211, 255–381 (ILES…SLTV), Glu-326, and Arg-335.

The protein belongs to the cAMP-dependent kinase regulatory chain family. The inactive holoenzyme is composed of two regulatory chains and two catalytic chains. Activation by cAMP releases the two active catalytic monomers and the regulatory dimer. Interacts with PRKX; regulates this cAMP-dependent protein kinase. Interacts with smAKAP; this interaction may target PRKAR1B to the plasma membrane. Post-translationally, the pseudophosphorylation site binds to the substrate-binding region of the catalytic chain, resulting in the inhibition of its activity. In terms of tissue distribution, abundant in brain and testis. No expression in lung, heart, liver, spleen, kidney and skeletal muscle.

The protein resides in the cell membrane. Its function is as follows. Regulatory subunit of the cAMP-dependent protein kinases involved in cAMP signaling in cells. The protein is cAMP-dependent protein kinase type I-beta regulatory subunit (Prkar1b) of Rattus norvegicus (Rat).